Reading from the N-terminus, the 152-residue chain is CASP-like protein 5B1 (152 aa).

Topologically, residues 1 to 11 are cytoplasmic; the sequence is MKKMIGSPGTM. A helical membrane pass occupies residues 12 to 32; that stretch reads SGLILRLGQCATAAASIGVMV. Topologically, residues 33–42 are extracellular; the sequence is SSYDFSNYTA. Residue asparagine 39 is glycosylated (N-linked (GlcNAc...) asparagine). Residues 43–63 form a helical membrane-spanning segment; sequence FCFLVASMGLQLIWSFGLACL. The Cytoplasmic portion of the chain corresponds to 64-77; the sequence is DVYAIRRKSDLRSP. A helical membrane pass occupies residues 78–98; it reads ILLSLFTVGDWVTALLALAAA. At 99–131 the chain is on the extracellular side; that stretch reads CSSAGVTVLFTKDTEFCRQQPALSCDRFQISVG. A helical transmembrane segment spans residues 132 to 152; it reads LSFFNWFLAAISSHTMFWILI.

Belongs to the Casparian strip membrane proteins (CASP) family. As to quaternary structure, homodimer and heterodimers. In terms of tissue distribution, expressed in leaves, exclusively in hair cells (e.g. differentiated trichomes and immature cells).

The protein resides in the cell membrane. This Arabidopsis thaliana (Mouse-ear cress) protein is CASP-like protein 5B1.